The following is a 522-amino-acid chain: 2-isopropylmalate synthase (522 aa).

In terms of domain architecture, Pyruvate carboxyltransferase spans 5 to 267 (VIIFDTTLRD…ETGINAKEIH (263 aa)). Asp14, His202, His204, and Asn238 together coordinate Mn(2+). Residues 392 to 522 (QLQQLVVQSD…MQKNRELGGV (131 aa)) are regulatory domain.

This sequence belongs to the alpha-IPM synthase/homocitrate synthase family. LeuA type 1 subfamily. As to quaternary structure, homodimer. Requires Mn(2+) as cofactor.

Its subcellular location is the cytoplasm. It carries out the reaction 3-methyl-2-oxobutanoate + acetyl-CoA + H2O = (2S)-2-isopropylmalate + CoA + H(+). Its pathway is amino-acid biosynthesis; L-leucine biosynthesis; L-leucine from 3-methyl-2-oxobutanoate: step 1/4. Functionally, catalyzes the condensation of the acetyl group of acetyl-CoA with 3-methyl-2-oxobutanoate (2-ketoisovalerate) to form 3-carboxy-3-hydroxy-4-methylpentanoate (2-isopropylmalate). This is 2-isopropylmalate synthase from Shewanella baltica (strain OS195).